The following is a 183-amino-acid chain: Cyanate hydratase (183 aa).

Residues Arg-118, Glu-121, and Ser-144 contribute to the active site.

The protein belongs to the cyanase family.

It carries out the reaction cyanate + hydrogencarbonate + 3 H(+) = NH4(+) + 2 CO2. In terms of biological role, catalyzes the reaction of cyanate with bicarbonate to produce ammonia and carbon dioxide. In Cryptococcus neoformans var. neoformans serotype D (strain B-3501A) (Filobasidiella neoformans), this protein is Cyanate hydratase.